Consider the following 277-residue polypeptide: Elongation factor Ts (277 aa).

The involved in Mg(2+) ion dislocation from EF-Tu stretch occupies residues 79 to 82 (TDFV).

Belongs to the EF-Ts family.

It localises to the cytoplasm. Functionally, associates with the EF-Tu.GDP complex and induces the exchange of GDP to GTP. It remains bound to the aminoacyl-tRNA.EF-Tu.GTP complex up to the GTP hydrolysis stage on the ribosome. This is Elongation factor Ts from Phytoplasma australiense.